We begin with the raw amino-acid sequence, 371 residues long: 4-hydroxy-3-methylbut-2-en-1-yl diphosphate synthase (flavodoxin) (371 aa).

Positions 272, 275, 307, and 314 each coordinate [4Fe-4S] cluster.

The protein belongs to the IspG family. Requires [4Fe-4S] cluster as cofactor.

It catalyses the reaction (2E)-4-hydroxy-3-methylbut-2-enyl diphosphate + oxidized [flavodoxin] + H2O + 2 H(+) = 2-C-methyl-D-erythritol 2,4-cyclic diphosphate + reduced [flavodoxin]. It participates in isoprenoid biosynthesis; isopentenyl diphosphate biosynthesis via DXP pathway; isopentenyl diphosphate from 1-deoxy-D-xylulose 5-phosphate: step 5/6. Its function is as follows. Converts 2C-methyl-D-erythritol 2,4-cyclodiphosphate (ME-2,4cPP) into 1-hydroxy-2-methyl-2-(E)-butenyl 4-diphosphate. This is 4-hydroxy-3-methylbut-2-en-1-yl diphosphate synthase (flavodoxin) from Pseudomonas paraeruginosa (strain DSM 24068 / PA7) (Pseudomonas aeruginosa (strain PA7)).